Reading from the N-terminus, the 299-residue chain is Homoserine O-acetyltransferase (299 aa).

The active-site Acyl-thioester intermediate is the cysteine 142. 2 residues coordinate substrate: lysine 163 and serine 192. The Proton acceptor role is filled by histidine 235. The active site involves glutamate 237. A substrate-binding site is contributed by arginine 249.

Belongs to the MetA family.

Its subcellular location is the cytoplasm. It carries out the reaction L-homoserine + acetyl-CoA = O-acetyl-L-homoserine + CoA. The protein operates within amino-acid biosynthesis; L-methionine biosynthesis via de novo pathway; O-acetyl-L-homoserine from L-homoserine: step 1/1. In terms of biological role, transfers an acetyl group from acetyl-CoA to L-homoserine, forming acetyl-L-homoserine. The polypeptide is Homoserine O-acetyltransferase (Synechococcus sp. (strain ATCC 27144 / PCC 6301 / SAUG 1402/1) (Anacystis nidulans)).